Reading from the N-terminus, the 263-residue chain is Endonuclease NucS (263 aa).

Belongs to the NucS endonuclease family.

Its subcellular location is the cytoplasm. In terms of biological role, cleaves both 3' and 5' ssDNA extremities of branched DNA structures. The sequence is that of Endonuclease NucS from Methanocaldococcus jannaschii (strain ATCC 43067 / DSM 2661 / JAL-1 / JCM 10045 / NBRC 100440) (Methanococcus jannaschii).